We begin with the raw amino-acid sequence, 966 residues long: DNA mismatch repair protein MutS (966 aa).

Residue 709–716 participates in ATP binding; it reads GPNMAGKS. Positions 894-914 are disordered; that stretch reads EGQRPPSSPAQPPAPPAPVVV. The span at 899 to 912 shows a compositional bias: pro residues; the sequence is PSSPAQPPAPPAPV.

Belongs to the DNA mismatch repair MutS family.

Functionally, this protein is involved in the repair of mismatches in DNA. It is possible that it carries out the mismatch recognition step. This protein has a weak ATPase activity. The polypeptide is DNA mismatch repair protein MutS (Chloroflexus aurantiacus (strain ATCC 29366 / DSM 635 / J-10-fl)).